The primary structure comprises 691 residues: Cyclic nucleotide-gated channel alpha-1 (691 aa).

The Cytoplasmic portion of the chain corresponds to 1–168 (MKKNIINTWY…PAGNMYYNWL (168 aa)). A disordered region spans residues 31-151 (ENGARSSFSD…KGKDKKEEEK (121 aa)). The span at 39 to 56 (SDDDGDDDSASMFEESEN) shows a compositional bias: acidic residues. Basic and acidic residues-rich tracts occupy residues 57–76 (ETPH…DPSQ) and 112–151 (SKSG…EEEK). Residues 169-190 (FCITLPVMYNWTMVIARACFDE) traverse the membrane as a helical segment. At 191–200 (LQSDYLEYWI) the chain is on the extracellular side. A helical transmembrane segment spans residues 201-221 (IFDYLSDIVYLLDMFVRTRTG). Over 222-246 (YLEQGLLVREEAKLIEKYKSNLQFK) the chain is Cytoplasmic. The chain crosses the membrane as a helical span at residues 247–265 (LDFLSVIPTDLLYFKLGWN). Residues 266-270 (YPEIR) lie on the Extracellular side of the membrane. The helical transmembrane segment at 271–289 (LNRLLRISRMFEFFQRTET) threads the bilayer. Over 290–296 (RTNYPNI) the chain is Cytoplasmic. Positions 294-402 (PNIFRISNLV…GNIGSMISNM (109 aa)) are ion conduction pathway. The chain crosses the membrane as a helical span at residues 297-320 (FRISNLVMYIVIIIHWNACVYFSI). Topologically, residues 321–343 (SKAIGFGNDTWVYPDVNDPEFGR) are extracellular. N328 is a glycosylation site (N-linked (GlcNAc...) asparagine). A run of 2 helical transmembrane segments spans residues 344–378 (LARK…VFVV) and 379–403 (VDFL…SNMN). The segment at 361 to 364 (TIGE) is selectivity filter. Residues 404–480 (AARAEFQARI…DTLKKVRIFA (77 aa)) are C-linker. Residues 404–691 (AARAEFQARI…ESRPLDSTQD (288 aa)) lie on the Cytoplasmic side of the membrane. Positions 484–604 (AGLLVELVLK…EEKGKQILMK (121 aa)) are cyclic nucleotide-binding domain. 4 residues coordinate 3',5'-cyclic GMP: G544, S547, R560, and T561. Positions 560 and 561 each coordinate 3',5'-cyclic AMP. Residues 622–676 (LEEKVTRMEGSVDLLQTRFARILAEYESMQQKLKQRLTKVERFLKPIIDTEFSAL) are a coiled coil.

This sequence belongs to the cyclic nucleotide-gated cation channel (TC 1.A.1.5) family. CNGA1 subfamily. In terms of assembly, forms heterotetrameric channels composed of CNGA1 and CNGB1 subunits with 3:1 stoichiometry. May also form cyclic nucleotide-activated homotetrameric channels, that are efficiently activated by saturating cGMP, but poorly activated by saturating cAMP compared to the heterotetramer with CNGB1. The channel binds Ca(2+)-bound CALM1 via CaM1 and CaM2 regions of the CNGB1 subunit; this interaction modulates the affinity of the channel for cNMPs in response to intracellular Ca(2+) levels.

It is found in the cell membrane. It catalyses the reaction Ca(2+)(in) = Ca(2+)(out). The enzyme catalyses Na(+)(in) = Na(+)(out). The catalysed reaction is K(+)(in) = K(+)(out). It carries out the reaction NH4(+)(in) = NH4(+)(out). It catalyses the reaction Rb(+)(in) = Rb(+)(out). The enzyme catalyses Li(+)(in) = Li(+)(out). The catalysed reaction is Cs(+)(in) = Cs(+)(out). Its function is as follows. Pore-forming subunit of the rod cyclic nucleotide-gated channel. Mediates rod photoresponses at dim light converting transient changes in intracellular cGMP levels into electrical signals. In the dark, cGMP levels are high and keep the channel open enabling a steady inward current carried by Na(+) and Ca(2+) ions that leads to membrane depolarization and neurotransmitter release from synaptic terminals. Upon photon absorption cGMP levels decline leading to channel closure and membrane hyperpolarization that ultimately slows neurotransmitter release and signals the presence of light, the end point of the phototransduction cascade. Conducts cGMP- and cAMP-gated ion currents, with permeability for monovalent and divalent cations. The selectivity for Ca(2+) over Na(+) increases with cGMP concentrations, whereas the selectivity among monovalent ions is independent of the cGMP levels. This chain is Cyclic nucleotide-gated channel alpha-1, found in Canis lupus familiaris (Dog).